A 195-amino-acid chain; its full sequence is Imidazoleglycerol-phosphate dehydratase (195 aa).

It belongs to the imidazoleglycerol-phosphate dehydratase family.

It localises to the cytoplasm. It catalyses the reaction D-erythro-1-(imidazol-4-yl)glycerol 3-phosphate = 3-(imidazol-4-yl)-2-oxopropyl phosphate + H2O. It participates in amino-acid biosynthesis; L-histidine biosynthesis; L-histidine from 5-phospho-alpha-D-ribose 1-diphosphate: step 6/9. The protein is Imidazoleglycerol-phosphate dehydratase of Burkholderia ambifaria (strain MC40-6).